Consider the following 142-residue polypeptide: Large ribosomal subunit protein uL13 (142 aa).

The protein belongs to the universal ribosomal protein uL13 family. In terms of assembly, part of the 50S ribosomal subunit.

This protein is one of the early assembly proteins of the 50S ribosomal subunit, although it is not seen to bind rRNA by itself. It is important during the early stages of 50S assembly. The protein is Large ribosomal subunit protein uL13 of Ruthia magnifica subsp. Calyptogena magnifica.